Reading from the N-terminus, the 199-residue chain is NAD(P)H dehydrogenase (quinone) (199 aa).

One can recognise a Flavodoxin-like domain in the interval 4-190 (VLVLYYSTYG…EGARHQGELI (187 aa)). FMN contacts are provided by residues 10 to 15 (STYGHV) and 78 to 80 (TRF). Tyrosine 12 is a binding site for NAD(+). Tryptophan 98 serves as a coordination point for substrate. Residues 113–119 (STATQHG) and histidine 134 each bind FMN.

This sequence belongs to the WrbA family. It depends on FMN as a cofactor.

The catalysed reaction is a quinone + NADH + H(+) = a quinol + NAD(+). It catalyses the reaction a quinone + NADPH + H(+) = a quinol + NADP(+). The protein is NAD(P)H dehydrogenase (quinone) of Cupriavidus metallidurans (strain ATCC 43123 / DSM 2839 / NBRC 102507 / CH34) (Ralstonia metallidurans).